A 378-amino-acid chain; its full sequence is Ribosomal RNA large subunit methyltransferase G (378 aa).

This sequence belongs to the methyltransferase superfamily. RlmG family.

The protein localises to the cytoplasm. The catalysed reaction is guanosine(1835) in 23S rRNA + S-adenosyl-L-methionine = N(2)-methylguanosine(1835) in 23S rRNA + S-adenosyl-L-homocysteine + H(+). Its function is as follows. Specifically methylates the guanine in position 1835 (m2G1835) of 23S rRNA. This chain is Ribosomal RNA large subunit methyltransferase G, found in Escherichia coli O139:H28 (strain E24377A / ETEC).